Consider the following 662-residue polypeptide: UPF0313 protein CPE1196 (662 aa).

The Radical SAM core domain maps to 296–567 (AIEEVKFSLV…AMQRALLQFK (272 aa)). Residues cysteine 310, cysteine 314, and cysteine 317 each coordinate [4Fe-4S] cluster. The segment at 597–662 (RDKNSFGKGN…QRGSKGKKRR (66 aa)) is disordered. A compositionally biased stretch (basic and acidic residues) spans 618 to 632 (NRNENSGRRESEDKK). Basic residues predominate over residues 633–644 (RSSHSKKQRGNK).

It belongs to the UPF0313 family. [4Fe-4S] cluster is required as a cofactor.

The chain is UPF0313 protein CPE1196 from Clostridium perfringens (strain 13 / Type A).